The following is a 171-amino-acid chain: MSACISPSDALLARRLIELTQAGLPLVADPWAWIAAQLRLSEAETLALLKRLRDAGVIRRIAAVPNHYRLGYRHNGMTVWDVADERIERLGRLVGGLSFVSHCYRRPRHLPQWRYNLFAMVHGRSEAEIEGYRQQIRLLLGEDCRADEMLVSSRILKKTGLRLAQKEERPC.

It belongs to the Ahb/Nir family. As to quaternary structure, probably forms a complex composed of NirD, NirL, NirG and NirH. All proteins are required for the total conversion of siroheme to didecarboxysiroheme.

The enzyme catalyses siroheme + 2 H(+) = 12,18-didecarboxysiroheme + 2 CO2. It participates in porphyrin-containing compound metabolism. In terms of biological role, involved in heme d1 biosynthesis. Catalyzes the decarboxylation of siroheme into didecarboxysiroheme. The polypeptide is Siroheme decarboxylase NirH subunit (Pseudomonas aeruginosa (strain ATCC 15692 / DSM 22644 / CIP 104116 / JCM 14847 / LMG 12228 / 1C / PRS 101 / PAO1)).